The sequence spans 862 residues: Rho guanine nucleotide exchange factor 7 (862 aa).

Residues 1 to 112 (MNSAEQTVTW…SLVTLNKVTA (112 aa)) form the Calponin-homology (CH) domain. Phosphoserine is present on residues Ser-132, Ser-155, Ser-164, Ser-228, and Ser-236. One can recognise an SH3 domain in the interval 163–222 (NSQLVVRAKFNFQQTNEDELSFSKGDVIHVTRVEEGGWWEGTHNGRTGWFPSNYVREIKP). One can recognise a DH domain in the interval 250-430 (YYNVVLQNIL…KNLSAQCQEV (181 aa)). The PH domain occupies 452-557 (DIKTLGSVTY…WVEHLQKQTK (106 aa)). A Phosphoserine modification is found at Ser-497. Disordered regions lie at residues 559–591 (TSVS…ADSK), 657–679 (KTMK…EFAV), and 728–748 (DQSS…EPSD). The segment covering 572 to 585 (PSHTLPSHPLTPSS) has biased composition (polar residues). Over residues 657–669 (KTMKKLLPKRKPE) the composition is skewed to basic residues. Residues 670 to 679 (RKPSDEEFAV) are compositionally biased toward basic and acidic residues. Ser-673 carries the post-translational modification Phosphoserine. Residues 731–744 (SLDSLGRRSSLSRL) are compositionally biased toward low complexity. Ser-776 is subject to Phosphoserine. Positions 804 to 854 (KSLVDTVYALKDEVQELRQDNKKMKKSLEEEQRARKDLEKLVRKVLKNMND) form a coiled coil.

In terms of assembly, interacts with PAK kinases through the SH3 domain. Interacts with unphosphorylated PAK1. Interacts with ITCH. Interacts with SCRIB; interaction is direct and may play a role in regulation of apoptosis. Interacts with GIT1 and TGFB1I1. Interacts with FRMPD4 (via N-terminus). Interacts with CaMK1. Interacts with BIN2. Interacts with PTK2/FAK1 and RAC1. Interacts with PARVB. Interacts with YWHAZ. Interacts (via PH domain) with NOX1 (via FAD-binding FR-type domain). In terms of processing, phosphorylated on Ser-673 by CaMK1; enhancement of GEF activity and downstream activation of RAC1. Phosphorylated by PTK2/FAK1; this promotes interaction with RAC1. In terms of tissue distribution, seems to be expressed in the central nervous system. Isoform B, isoform C and isoform E are expressed with highest levels in brain and testis.

The protein resides in the cell junction. The protein localises to the focal adhesion. It localises to the cell projection. It is found in the ruffle. Its subcellular location is the cytoplasm. The protein resides in the cell cortex. The protein localises to the lamellipodium. Its function is as follows. Acts as a RAC1 guanine nucleotide exchange factor (GEF) and can induce membrane ruffling. May function as a positive regulator of apoptosis. Functions in cell migration, attachment and cell spreading. Promotes targeting of RAC1 to focal adhesions. Downstream of NMDA receptors and CaMKK-CaMK1 signaling cascade, promotes the formation of spines and synapses in hippocampal neurons. The polypeptide is Rho guanine nucleotide exchange factor 7 (Arhgef7) (Mus musculus (Mouse)).